We begin with the raw amino-acid sequence, 105 residues long: Iron-sulfur cluster assembly protein CyaY (105 aa).

This sequence belongs to the frataxin family.

In terms of biological role, involved in iron-sulfur (Fe-S) cluster assembly. May act as a regulator of Fe-S biogenesis. This Photobacterium profundum (strain SS9) protein is Iron-sulfur cluster assembly protein CyaY.